The chain runs to 130 residues: Protein ApaG (130 aa).

In terms of domain architecture, ApaG spans 3–127; that stretch reads RAVTRQIEVL…FSLDSPDIRR (125 aa).

In Afipia carboxidovorans (strain ATCC 49405 / DSM 1227 / KCTC 32145 / OM5) (Oligotropha carboxidovorans), this protein is Protein ApaG.